The sequence spans 146 residues: UPF0178 protein BCA_3127 (146 aa).

The protein belongs to the UPF0178 family.

This Bacillus cereus (strain 03BB102) protein is UPF0178 protein BCA_3127.